A 726-amino-acid polypeptide reads, in one-letter code: Methionine--tRNA ligase (726 aa).

Residues 12–22 carry the 'HIGH' region motif; it reads PYVNNIPHLGN. Zn(2+)-binding residues include Cys143, Cys146, Cys155, and Cys158. Residues 330-334 carry the 'KMSKS' region motif; it reads KFSKS. Lys333 contributes to the ATP binding site. Residues 562 to 667 form the tRNA-binding domain; sequence FSEQICLKTV…DNPIPGERVI (106 aa).

The protein belongs to the class-I aminoacyl-tRNA synthetase family. MetG type 1 subfamily. In terms of assembly, homodimer. The cofactor is Zn(2+).

The protein resides in the cytoplasm. It catalyses the reaction tRNA(Met) + L-methionine + ATP = L-methionyl-tRNA(Met) + AMP + diphosphate. In terms of biological role, is required not only for elongation of protein synthesis but also for the initiation of all mRNA translation through initiator tRNA(fMet) aminoacylation. This is Methionine--tRNA ligase from Borrelia duttonii (strain Ly).